We begin with the raw amino-acid sequence, 447 residues long: MREIVHLQTGQCGNQIGAAFWQTISGEHGLDGSGVYNGTSDLQLERTNVYFNEASGNKYVPRAVLVDLEPGTMDAVRAGPFGQLFRPDNFVFGQSGAGNNWAKGHYTEGAELVDQVLDVVRREAEGCDCLQGFQITHSLGGGTGAGMGTLLISKIREEFPDRMMATFSVVPSPKVSDTVVEPYNATLSVHQLVENSDETFCIDNEALYEICMRTLKLSNPSYGDLNHLVSAVMSGVTTCLRFPGQLNSDLRKLAVNMVPFPRLHFFMVGFAPLTSRGAHSFRAVTVPELTQQMYDPKNMMAASDFRNGRYLTCSAIFRGKVSMKEVEDQMRNVQNKNSAYFVEWIPNNVQTALCSIPPRGLKMSSTFVGNSTSIQELFKRVGDQFTAMFRRKAFLHWYTGEGMDEMEFTEAESNMNDLVHEYQQYQDASISEGEEDYEEEPQVENEE.

GTP-binding residues include Q11, E69, S138, G142, T143, G144, N204, and N226. E69 is a Mg(2+) binding site. The segment at 424–447 is disordered; the sequence is QYQDASISEGEEDYEEEPQVENEE. Over residues 432-447 the composition is skewed to acidic residues; it reads EGEEDYEEEPQVENEE.

This sequence belongs to the tubulin family. Dimer of alpha and beta chains. A typical microtubule is a hollow water-filled tube with an outer diameter of 25 nm and an inner diameter of 15 nM. Alpha-beta heterodimers associate head-to-tail to form protofilaments running lengthwise along the microtubule wall with the beta-tubulin subunit facing the microtubule plus end conferring a structural polarity. Microtubules usually have 13 protofilaments but different protofilament numbers can be found in some organisms and specialized cells. Requires Mg(2+) as cofactor.

Its subcellular location is the cytoplasm. It localises to the cytoskeleton. Its function is as follows. Tubulin is the major constituent of microtubules, a cylinder consisting of laterally associated linear protofilaments composed of alpha- and beta-tubulin heterodimers. Microtubules grow by the addition of GTP-tubulin dimers to the microtubule end, where a stabilizing cap forms. Below the cap, tubulin dimers are in GDP-bound state, owing to GTPase activity of alpha-tubulin. The sequence is that of Tubulin beta chain from Uncinula necator (Grape powdery mildew).